The chain runs to 566 residues: Class II hydrophobin FOXG_02748 (566 aa).

An N-terminal signal peptide occupies residues 1-22; it reads MKSKSIMAASTVMELALAQASA. 4 disulfide bridges follow: C497/C546, C507/C537, C508/C520, and C547/C558.

This sequence belongs to the cerato-ulmin hydrophobin family. Homodimer. Homodimers further self-assemble to form highly ordered films at water-air interfaces through intermolecular interactions.

The protein resides in the secreted. Its subcellular location is the cell wall. In terms of biological role, aerial growth, conidiation, and dispersal of filamentous fungi in the environment rely upon a capability of their secreting small amphipathic proteins called hydrophobins (HPBs) with low sequence identity. Class I can self-assemble into an outermost layer of rodlet bundles on aerial cell surfaces, conferring cellular hydrophobicity that supports fungal growth, development and dispersal; whereas Class II form highly ordered films at water-air interfaces through intermolecular interactions but contribute nothing to the rodlet structure. FOXG_02748 is a class II hydrophobin that is likely required for plant colonization. This is Class II hydrophobin FOXG_02748 from Fusarium oxysporum f. sp. lycopersici (strain 4287 / CBS 123668 / FGSC 9935 / NRRL 34936) (Fusarium vascular wilt of tomato).